A 387-amino-acid polypeptide reads, in one-letter code: 3-ketoacyl-CoA thiolase (387 aa).

Cysteine 91 acts as the Acyl-thioester intermediate in catalysis. Catalysis depends on proton acceptor residues histidine 343 and cysteine 373.

It belongs to the thiolase-like superfamily. Thiolase family. As to quaternary structure, heterotetramer of two alpha chains (FadB) and two beta chains (FadA).

It is found in the cytoplasm. It catalyses the reaction an acyl-CoA + acetyl-CoA = a 3-oxoacyl-CoA + CoA. The protein operates within lipid metabolism; fatty acid beta-oxidation. Its function is as follows. Catalyzes the final step of fatty acid oxidation in which acetyl-CoA is released and the CoA ester of a fatty acid two carbons shorter is formed. The sequence is that of 3-ketoacyl-CoA thiolase from Salmonella paratyphi A (strain ATCC 9150 / SARB42).